The chain runs to 227 residues: MKNIYKISWLDFFLIEKKKEYFLYLLNKIKNIRRNTIVYPKKNMVFNAFLFTPLSSIKVVILGQDPYHSAGQAHGLSFSVPKGVFLPPSLKNIFIELKNNFSFYKKNIHGCLESWAKQGVFLLNSILTVSKGIPNSHKNLGWEIFTDQVIKFISDICKGVVFLLWGNISQKKYYLIDSKKHFILRSTHPSPLSCYKGFFGCNHFFKTNVLLQNQKKKPINWFLDLFE.

Residue Asp-65 is the Proton acceptor of the active site.

This sequence belongs to the uracil-DNA glycosylase (UDG) superfamily. UNG family.

It localises to the cytoplasm. It carries out the reaction Hydrolyzes single-stranded DNA or mismatched double-stranded DNA and polynucleotides, releasing free uracil.. In terms of biological role, excises uracil residues from the DNA which can arise as a result of misincorporation of dUMP residues by DNA polymerase or due to deamination of cytosine. The protein is Uracil-DNA glycosylase of Buchnera aphidicola subsp. Cinara cedri (strain Cc).